The primary structure comprises 164 residues: Nucleotide-binding protein Daro_3028 (164 aa).

This sequence belongs to the YajQ family.

Its function is as follows. Nucleotide-binding protein. This Dechloromonas aromatica (strain RCB) protein is Nucleotide-binding protein Daro_3028.